The following is a 204-amino-acid chain: Large ribosomal subunit protein bL9 (204 aa).

Residues 180-204 (DDIGGAASDDEGDAPAAAADEEESK) are disordered. Residues 187–204 (SDDEGDAPAAAADEEESK) show a composition bias toward acidic residues.

It belongs to the bacterial ribosomal protein bL9 family.

In terms of biological role, binds to the 23S rRNA. This chain is Large ribosomal subunit protein bL9, found in Ruegeria sp. (strain TM1040) (Silicibacter sp.).